The primary structure comprises 354 residues: Ornithine carbamoyltransferase, catabolic (354 aa).

Residues S67–T70, Q94, R118, and H145–Q148 each bind carbamoyl phosphate. L-ornithine-binding positions include N177, D241, and S245–M246. Carbamoyl phosphate-binding positions include C284–L285 and R329.

It belongs to the aspartate/ornithine carbamoyltransferase superfamily. OTCase family.

It is found in the cytoplasm. It catalyses the reaction carbamoyl phosphate + L-ornithine = L-citrulline + phosphate + H(+). It participates in amino-acid degradation; L-arginine degradation via ADI pathway; carbamoyl phosphate from L-arginine: step 2/2. Its function is as follows. Reversibly catalyzes the transfer of the carbamoyl group from carbamoyl phosphate (CP) to the N(epsilon) atom of ornithine (ORN) to produce L-citrulline. The sequence is that of Ornithine carbamoyltransferase, catabolic (arcB) from Lactococcus lactis subsp. cremoris (Streptococcus cremoris).